The sequence spans 463 residues: L-seryl-tRNA(Sec) selenium transferase (463 aa).

N6-(pyridoxal phosphate)lysine is present on Lys295.

Belongs to the SelA family. In terms of assembly, homodecamer; pentamer of dimers. Binds only one seryl-tRNA(Sec) per dimer. It depends on pyridoxal 5'-phosphate as a cofactor.

The protein localises to the cytoplasm. The catalysed reaction is L-seryl-tRNA(Sec) + selenophosphate + H(+) = L-selenocysteinyl-tRNA(Sec) + phosphate. It participates in aminoacyl-tRNA biosynthesis; selenocysteinyl-tRNA(Sec) biosynthesis; selenocysteinyl-tRNA(Sec) from L-seryl-tRNA(Sec) (bacterial route): step 1/1. Converts seryl-tRNA(Sec) to selenocysteinyl-tRNA(Sec) required for selenoprotein biosynthesis. The protein is L-seryl-tRNA(Sec) selenium transferase of Shigella boydii serotype 18 (strain CDC 3083-94 / BS512).